The chain runs to 502 residues: 2-isopropylmalate synthase (502 aa).

Mn(2+) is bound by residues Asp-1, His-189, His-191, and Asn-225. The Pyruvate carboxyltransferase domain maps to 1–254; that stretch reads DGEQALQASL…STNINHKEIY (254 aa). The tract at residues 379 to 502 is regulatory domain; sequence CLKFFSVQSI…VNKNLKNLKK (124 aa).

This sequence belongs to the alpha-IPM synthase/homocitrate synthase family. LeuA type 1 subfamily. In terms of assembly, homodimer. It depends on Mn(2+) as a cofactor.

It localises to the cytoplasm. It carries out the reaction 3-methyl-2-oxobutanoate + acetyl-CoA + H2O = (2S)-2-isopropylmalate + CoA + H(+). The protein operates within amino-acid biosynthesis; L-leucine biosynthesis; L-leucine from 3-methyl-2-oxobutanoate: step 1/4. Functionally, catalyzes the condensation of the acetyl group of acetyl-CoA with 3-methyl-2-oxobutanoate (2-ketoisovalerate) to form 3-carboxy-3-hydroxy-4-methylpentanoate (2-isopropylmalate). In Buchnera aphidicola subsp. Uroleucon sonchi, this protein is 2-isopropylmalate synthase.